Consider the following 80-residue polypeptide: ATP synthase subunit c (80 aa).

The next 2 helical transmembrane spans lie at 11 to 31 (IAATIMMGLAAIGAAIGIGIL) and 54 to 74 (FIVMGLVDAIPMITVGLGLYI).

Belongs to the ATPase C chain family. As to quaternary structure, F-type ATPases have 2 components, F(1) - the catalytic core - and F(0) - the membrane proton channel. F(1) has five subunits: alpha(3), beta(3), gamma(1), delta(1), epsilon(1). F(0) has three main subunits: a(1), b(2) and c(10-14). The alpha and beta chains form an alternating ring which encloses part of the gamma chain. F(1) is attached to F(0) by a central stalk formed by the gamma and epsilon chains, while a peripheral stalk is formed by the delta and b chains.

Its subcellular location is the cell membrane. F(1)F(0) ATP synthase produces ATP from ADP in the presence of a proton or sodium gradient. F-type ATPases consist of two structural domains, F(1) containing the extramembraneous catalytic core and F(0) containing the membrane proton channel, linked together by a central stalk and a peripheral stalk. During catalysis, ATP synthesis in the catalytic domain of F(1) is coupled via a rotary mechanism of the central stalk subunits to proton translocation. Its function is as follows. Key component of the F(0) channel; it plays a direct role in translocation across the membrane. A homomeric c-ring of between 10-14 subunits forms the central stalk rotor element with the F(1) delta and epsilon subunits. This Baumannia cicadellinicola subsp. Homalodisca coagulata protein is ATP synthase subunit c.